The chain runs to 338 residues: F420-dependent glucose-6-phosphate dehydrogenase (338 aa).

Coenzyme F420-(gamma-Glu)n is bound at residue D40. H41 serves as the catalytic Proton donor. Residues T77 and 108 to 109 (TG) each bind coenzyme F420-(gamma-Glu)n. E110 serves as the catalytic Proton acceptor. Coenzyme F420-(gamma-Glu)n-binding positions include N113, 178–179 (GG), and 181–182 (VV). T196, K199, K260, and R284 together coordinate substrate.

The protein belongs to the F420-dependent glucose-6-phosphate dehydrogenase family. In terms of assembly, homodimer.

It carries out the reaction oxidized coenzyme F420-(gamma-L-Glu)(n) + D-glucose 6-phosphate + H(+) = 6-phospho-D-glucono-1,5-lactone + reduced coenzyme F420-(gamma-L-Glu)(n). In terms of biological role, catalyzes the coenzyme F420-dependent oxidation of glucose 6-phosphate (G6P) to 6-phosphogluconolactone. This Gordonia bronchialis (strain ATCC 25592 / DSM 43247 / BCRC 13721 / JCM 3198 / KCTC 3076 / NBRC 16047 / NCTC 10667) (Rhodococcus bronchialis) protein is F420-dependent glucose-6-phosphate dehydrogenase.